The sequence spans 287 residues: Putative syntaxin-4 (287 aa).

Topologically, residues 1-262 (MHQISGINAA…NRKWKIVTCI (262 aa)) are cytoplasmic. Positions 65–97 (KCRKLNDHVDKFIAQARGIRRRLADASEELVQY) form a coiled coil. Residues 184–246 (FDDMKNRATD…EQAQQNVRQA (63 aa)) form the t-SNARE coiled-coil homology domain. The helical; Anchor for type IV membrane protein transmembrane segment at 263-283 (ALIVLLLVVVYLLSHFLGAII) threads the bilayer. The Extracellular segment spans residues 284–287 (PGWK).

This sequence belongs to the syntaxin family.

Its subcellular location is the membrane. Functionally, potentially involved in docking of synaptic vesicles at presynaptic active zones. This is Putative syntaxin-4 (syx-4) from Caenorhabditis elegans.